The following is a 396-amino-acid chain: 1-deoxy-D-xylulose 5-phosphate reductoisomerase (396 aa).

6 residues coordinate NADPH: threonine 10, glycine 11, serine 12, isoleucine 13, asparagine 38, and asparagine 123. Lysine 124 is a binding site for 1-deoxy-D-xylulose 5-phosphate. Glutamate 125 serves as a coordination point for NADPH. Aspartate 149 contributes to the Mn(2+) binding site. The 1-deoxy-D-xylulose 5-phosphate site is built by serine 150, glutamate 151, serine 185, and histidine 208. Glutamate 151 contacts Mn(2+). Position 214 (glycine 214) interacts with NADPH. 1-deoxy-D-xylulose 5-phosphate is bound by residues serine 221, asparagine 226, lysine 227, and glutamate 230. Residue glutamate 230 participates in Mn(2+) binding.

It belongs to the DXR family. Requires Mg(2+) as cofactor. The cofactor is Mn(2+).

The enzyme catalyses 2-C-methyl-D-erythritol 4-phosphate + NADP(+) = 1-deoxy-D-xylulose 5-phosphate + NADPH + H(+). The protein operates within isoprenoid biosynthesis; isopentenyl diphosphate biosynthesis via DXP pathway; isopentenyl diphosphate from 1-deoxy-D-xylulose 5-phosphate: step 1/6. Catalyzes the NADPH-dependent rearrangement and reduction of 1-deoxy-D-xylulose-5-phosphate (DXP) to 2-C-methyl-D-erythritol 4-phosphate (MEP). The polypeptide is 1-deoxy-D-xylulose 5-phosphate reductoisomerase (Shewanella halifaxensis (strain HAW-EB4)).